The primary structure comprises 197 residues: Predicted GPI-anchored protein 34 (197 aa).

The signal sequence occupies residues 1-20; it reads MKFTSLICSSILLIIPTVMA. Asparagine 110, asparagine 114, and asparagine 152 each carry an N-linked (GlcNAc...) asparagine glycan. The GPI-anchor amidated glycine moiety is linked to residue glycine 169. Positions 170–197 are cleaved as a propeptide — removed in mature form; sequence AAAMAGPVPILTNSIFTAGLLALAAVLL.

It localises to the cell membrane. Functionally, predicted GPI-anchored protein which may have a role during host infection. The chain is Predicted GPI-anchored protein 34 (PGA34) from Candida albicans (strain SC5314 / ATCC MYA-2876) (Yeast).